The chain runs to 154 residues: ATP synthase subunit b (154 aa).

A helical membrane pass occupies residues 9-29; the sequence is AIAFVIFVWFCMKYVWPPLMA.

It belongs to the ATPase B chain family. In terms of assembly, F-type ATPases have 2 components, F(1) - the catalytic core - and F(0) - the membrane proton channel. F(1) has five subunits: alpha(3), beta(3), gamma(1), delta(1), epsilon(1). F(0) has three main subunits: a(1), b(2) and c(10-14). The alpha and beta chains form an alternating ring which encloses part of the gamma chain. F(1) is attached to F(0) by a central stalk formed by the gamma and epsilon chains, while a peripheral stalk is formed by the delta and b chains.

The protein localises to the cell inner membrane. F(1)F(0) ATP synthase produces ATP from ADP in the presence of a proton or sodium gradient. F-type ATPases consist of two structural domains, F(1) containing the extramembraneous catalytic core and F(0) containing the membrane proton channel, linked together by a central stalk and a peripheral stalk. During catalysis, ATP synthesis in the catalytic domain of F(1) is coupled via a rotary mechanism of the central stalk subunits to proton translocation. In terms of biological role, component of the F(0) channel, it forms part of the peripheral stalk, linking F(1) to F(0). The polypeptide is ATP synthase subunit b (Klebsiella pneumoniae subsp. pneumoniae (strain ATCC 700721 / MGH 78578)).